We begin with the raw amino-acid sequence, 423 residues long: 26S proteasome regulatory subunit 6A homolog B (423 aa).

S18 carries the phosphoserine modification. Residue 211–218 coordinates ATP; the sequence is GPPGTGKT. Residues K234, K278, and K415 each participate in a glycyl lysine isopeptide (Lys-Gly) (interchain with G-Cter in ubiquitin) cross-link.

This sequence belongs to the AAA ATPase family. As to quaternary structure, component of the 19S regulatory particle (RP/PA700) base subcomplex of the 26S proteasome. The 26S proteasome is composed of a core protease (CP), known as the 20S proteasome, capped at one or both ends by the 19S regulatory particle (RP/PA700). The RP/PA700 complex is composed of at least 17 different subunits in two subcomplexes, the base and the lid, which form the portions proximal and distal to the 20S proteolytic core, respectively.

Its subcellular location is the cytoplasm. The protein localises to the nucleus. Functionally, the 26S proteasome is involved in the ATP-dependent degradation of ubiquitinated proteins. The regulatory (or ATPase) complex confers ATP dependency and substrate specificity to the 26S complex. This chain is 26S proteasome regulatory subunit 6A homolog B (RPT5B), found in Arabidopsis thaliana (Mouse-ear cress).